We begin with the raw amino-acid sequence, 347 residues long: Microfibril-associated glycoprotein 3 (347 aa).

Positions 1–22 (MKLHYCLCILLVVTFVPTALVL) are cleaved as a signal peptide. Topologically, residues 23–139 (EDVTPLGTNQ…TLRVIFTSGD (117 aa)) are extracellular. 4 N-linked (GlcNAc...) asparagine glycosylation sites follow: N31, N36, N63, and N103. The region spanning 47–130 (AGSYSGDDVI…SPTRASYSVT (84 aa)) is the Ig-like C2-type domain. C68 and C117 are joined by a disulfide. A helical membrane pass occupies residues 140 to 160 (MSVYYMVVCLIAFTITLILNV). Residues 161–347 (TRLCLMSTHL…SAEGSTHHRE (187 aa)) lie on the Cytoplasmic side of the membrane. The disordered stretch occupies residues 280–347 (NPELGRSNSP…SAEGSTHHRE (68 aa)). A compositionally biased stretch (polar residues) spans 311–331 (VHLQSETKSIGTDSQDSSHFS).

In terms of processing, glycosylated.

The protein resides in the cell membrane. Its function is as follows. Component of the elastin-associated microfibrils. This is Microfibril-associated glycoprotein 3 (Mfap3) from Rattus norvegicus (Rat).